Consider the following 335-residue polypeptide: Cell division protein ZipA (335 aa).

Residues 1-4 (MDLN) are Periplasmic-facing. The chain crosses the membrane as a helical span at residues 5–25 (AILIILGVIALIILVAHGIWS). The Cytoplasmic segment spans residues 26–335 (NRCEKSQYFE…AERDYLARVS (310 aa)).

This sequence belongs to the ZipA family. Interacts with FtsZ via their C-terminal domains.

Its subcellular location is the cell inner membrane. Its function is as follows. Essential cell division protein that stabilizes the FtsZ protofilaments by cross-linking them and that serves as a cytoplasmic membrane anchor for the Z ring. Also required for the recruitment to the septal ring of downstream cell division proteins. The protein is Cell division protein ZipA of Histophilus somni (strain 129Pt) (Haemophilus somnus).